Here is a 318-residue protein sequence, read N- to C-terminus: D-alanine--D-alanine ligase (318 aa).

The region spanning 116–311 (KQVWQSLGIP…FQQLVLAILA (196 aa)) is the ATP-grasp domain. 142–197 (SAELGFPLIVKPAHEGSSIGMAKVNSEQELVAAWKDAAKYDSQVLVEQWIHGPEFT) lines the ATP pocket. Asp265, Glu278, and Asn280 together coordinate Mg(2+).

It belongs to the D-alanine--D-alanine ligase family. Mg(2+) is required as a cofactor. The cofactor is Mn(2+).

It localises to the cytoplasm. It carries out the reaction 2 D-alanine + ATP = D-alanyl-D-alanine + ADP + phosphate + H(+). Its pathway is cell wall biogenesis; peptidoglycan biosynthesis. Cell wall formation. This chain is D-alanine--D-alanine ligase, found in Pseudomonas entomophila (strain L48).